Here is a 520-residue protein sequence, read N- to C-terminus: Kelch domain-containing protein 4 (520 aa).

Residues 1–10 (MGKKGKKEKK) are compositionally biased toward basic residues. The segment at 1 to 33 (MGKKGKKEKKGRGAEKTAAKMEKKVSKRSRKEE) is disordered. Residues 11-24 (GRGAEKTAAKMEKK) show a composition bias toward basic and acidic residues. 5 Kelch repeats span residues 77 to 129 (ELIL…VVPQ), 133 to 187 (QLWV…AWKR), 188 to 241 (QLIL…VTPQ), 243 to 289 (GIVV…MNPS), and 308 to 361 (QTLF…RRGR). Disordered regions lie at residues 346 to 379 (QLKG…AGTQ), 402 to 431 (LTAP…GPCP), and 481 to 520 (DPET…GAED). A phosphoserine mark is found at S413 and S418. The stretch at 443–494 (VLYVYGGMFEAGDRQVTLSDLHCLDLHRMEAWKALVEMDPETQEWLEETDSE) is one Kelch 6 repeat.

This chain is Kelch domain-containing protein 4 (KLHDC4), found in Homo sapiens (Human).